A 409-amino-acid chain; its full sequence is MKGPAFSKPLKDKINPWGPLIVLGILIRAGVSVQHDSPHQVFNVTWRVTNLMTGQTANATSLLGTMTDAFPMLHFDLCDLIGDDWDETGLECRTPGGRKRARTFDFYVCPGHTVPTGCGGPREGYCGKWGCETTGQAYWKPSSSWDLISLKRGNTPKDRGPCYDSSVSSGVQGATPGGRCNPLVLKFTDAGKKASWDSPKVWGLRLYRPTGIDPVTRFSLTRQVLNIGPRIPIGPNPVIIGQLPPSRPVQVRLPRPPQPPPTGAASMVPGTAPPSQQPGTGDRLLNLVQGAYQALNLTNPDKTQECWLCLVSGPPYYEGVAVLGTNSNHTSALKEKCCFYADHTGLVRDSMAKLRKRLTQRQKLFESSQGWFEGSFNRSPWFTTLISTIMGLLIILLLLLILLLWTLHS.

The N-terminal stretch at 1 to 32 (MKGPAFSKPLKDKINPWGPLIVLGILIRAGVS) is a signal peptide. Residues 33-384 (VQHDSPHQVF…SFNRSPWFTT (352 aa)) lie on the Virion surface side of the membrane. Residues Asn-43 and Asn-58 are each glycosylated (N-linked (GlcNAc...) asparagine; by host). The tract at residues 254–280 (PRPPQPPPTGAASMVPGTAPPSQQPGT) is disordered. Asn-296 and Asn-328 each carry an N-linked (GlcNAc...) asparagine; by host glycan. The chain crosses the membrane as a helical span at residues 385–405 (LISTIMGLLIILLLLLILLLW). Residues 406-409 (TLHS) are Intravirion-facing.

As to quaternary structure, homooligomer. Forms heterooligomers with mouse EPOR, probably via their respective transmembrane domains. Forms covalent heterodimers with mouse MST1R isoform sf-Stk, probably via disulfide bonds.

The protein resides in the host endoplasmic reticulum membrane. Its subcellular location is the host cell membrane. It localises to the virion membrane. This envelope-like membrane glycoprotein is responsible for ligand-independent activation of the erythropoietin receptor EPOR leading to the abnormally rapid proliferation of erythroid precursor cells. In the first stage of Friend disease, constitutive activation of EPOR by gp55 causes uncontrolled, polyclonal proliferation of infected erythroblasts, leading to polycythemia (massive increase in the number of mature red cells). Host susceptibility to SSFV-induced erythroblastosis depends on the expression of the truncated isoform of MST1R receptor tyrosine kinase (MST1R isoform sf-Stk). Interaction with SSFV gp 55 results in constitutive tyrosine phosphorylation and activation of MST1R isoform sf-Stk. This chain is Glycoprotein 55 (env), found in Mus musculus (Mouse).